Here is a 398-residue protein sequence, read N- to C-terminus: MKAVVLVVVSLLALSSINCDVFFEEKFPDDSWESNWVYSEHPGKEFGKFKLTAGKFFSDPEDDKGLKTSEDARFYALSRKFKPFSNEGKPLVVQFTVKHEQDIDCGGGYLKVFDCKLEQKDMHGETPYEIMFGPDICGPGTKKVHVIFSYKGKNHLIKKDIRCKDDVYTHLYTLIVKPDNTYEVLIDNEKVESGDLEADWDFLPNKKIKDPEAKKPEDWDDKPTIPDPEDKKPEDWDKPEHIPDPDATKPEDWDDEMDGEWEPPMIDNPDYKGVWAPKQIDNPAYKGPWVHPEIDNPEYTPDSNLYKRDEICAVGLDLWQVKSGTIFDDFLITDDPAAAKERGEVIKKRQEGEKKMKSEQDEAEREKEKAEKPDDEEDDEDLDDETGDAAPVEEHDEL.

The first 19 residues, 1 to 19 (MKAVVLVVVSLLALSSINC), serve as a signal peptide directing secretion. The N-domain stretch occupies residues 20–197 (DVFFEEKFPD…NEKVESGDLE (178 aa)). The cysteines at positions 105 and 137 are disulfide-linked. An alpha-D-glucoside-binding residues include Y109, K111, Y128, and D135. 7 tandem repeats follow at residues 191-202 (VESGDLEADWDF), 210-221 (DPEAKKPEDWDD), 227-238 (DPEDKKPEDWDK), 244-255 (DPDATKPEDWDD), 259-269 (GEWEPPMIDNP), 273-283 (GVWAPKQIDNP), and 287-297 (GPWVHPEIDNP). The segment at 191-255 (VESGDLEADW…DATKPEDWDD (65 aa)) is 4 X approximate repeats. The P-domain stretch occupies residues 198–308 (ADWDFLPNKK…YTPDSNLYKR (111 aa)). A compositionally biased stretch (basic and acidic residues) spans 207–251 (KIKDPEAKKPEDWDDKPTIPDPEDKKPEDWDKPEHIPDPDATKPE). A disordered region spans residues 207–257 (KIKDPEAKKPEDWDDKPTIPDPEDKKPEDWDKPEHIPDPDATKPEDWDDEM). The interval 259 to 297 (GEWEPPMIDNPDYKGVWAPKQIDNPAYKGPWVHPEIDNP) is 3 X approximate repeats. Residues 309-398 (DEICAVGLDL…AAPVEEHDEL (90 aa)) form a C-domain region. D317 serves as a coordination point for an alpha-D-glucoside. The interval 334-398 (DDPAAAKERG…AAPVEEHDEL (65 aa)) is disordered. Residues 337–372 (AAAKERGEVIKKRQEGEKKMKSEQDEAEREKEKAEK) are compositionally biased toward basic and acidic residues. The span at 373–387 (PDDEEDDEDLDDETG) shows a compositional bias: acidic residues. A Prevents secretion from ER motif is present at residues 395-398 (HDEL).

Belongs to the calreticulin family. As to quaternary structure, monomer. As to expression, expressed in fat bodies. Not expressed in midgut, silk gland, ovary or testis.

Its subcellular location is the endoplasmic reticulum lumen. Functionally, molecular calcium-binding chaperone promoting folding, oligomeric assembly and quality control in the ER via the calreticulin/calnexin cycle. This lectin may interact transiently with almost all of the monoglucosylated glycoproteins that are synthesized in the ER. The protein is Calreticulin of Bombyx mori (Silk moth).